A 608-amino-acid chain; its full sequence is Formate hydrogenlyase subunit 3 (608 aa).

Transmembrane regions (helical) follow at residues 10 to 26 (GVAW…LFSF), 44 to 67 (LYTA…LSLV), 76 to 93 (LNAI…FVSL), 116 to 140 (AAAV…MALC), 153 to 173 (LWFA…WLLW), 197 to 218 (IWLL…HGWV), 229 to 251 (AAAL…LSLL), 258 to 280 (WWGI…YALV), 296 to 312 (IGII…GIAL), 416 to 440 (LAVG…VTFL), 453 to 476 (CAPL…GVAA), and 502 to 521 (MITL…MAIC).

This sequence belongs to the complex I subunit 4 family. FHL comprises of a formate dehydrogenase, unidentified electron carriers and a hydrogenase (isoenzyme 3). In this non-energy conserving pathway molecular hydrogen and carbodioxide from formate are released.

It localises to the cell inner membrane. The sequence is that of Formate hydrogenlyase subunit 3 (hycC) from Escherichia coli (strain K12).